Here is a 382-residue protein sequence, read N- to C-terminus: MKSLSILGSTGSIGLSTLDVVRQHPEKFNVTGLAEGHDINLLAEQIKEFRPDIVSVRDKASAGLLREQLGSEKPEILWGIEGAAAVGAAEGSEMVVSAIVGAAGLVPTVSAIKAGKDIALANKETLVVAGQLVSDLVKEHKVTLLPVDSEHSAIFQSLSGHRKEDIERIILTASGGPFRHTSAEDLRHVGPEKALKHPQWTMGAKITIDSATLMNKGLEVIEAHWLFDMPADKIGVVVHPQSIIHSMVEYIDGCVMAQLGAPDMRAPIAYALAWPERCESGIKKLDLTQIGTLTFEQPDMERFPALRLAFDALKAGQTFPAVLNAANEIAVAAFLDKKIGFTDIPAIADRTMQAHDPYTPSGLDEYLAADRWARDTAKTMTN.

NADPH is bound by residues Thr10, Gly11, Ser12, Ile13, Gly36, and Asn122. Lys123 is a binding site for 1-deoxy-D-xylulose 5-phosphate. Position 124 (Glu124) interacts with NADPH. Asp148 provides a ligand contact to Mn(2+). 1-deoxy-D-xylulose 5-phosphate contacts are provided by Ser149, Glu150, Ser174, and His197. Glu150 contributes to the Mn(2+) binding site. Gly203 contacts NADPH. 4 residues coordinate 1-deoxy-D-xylulose 5-phosphate: Ser210, Asn215, Lys216, and Glu219. Glu219 is a binding site for Mn(2+).

It belongs to the DXR family. It depends on Mg(2+) as a cofactor. Requires Mn(2+) as cofactor.

The enzyme catalyses 2-C-methyl-D-erythritol 4-phosphate + NADP(+) = 1-deoxy-D-xylulose 5-phosphate + NADPH + H(+). It functions in the pathway isoprenoid biosynthesis; isopentenyl diphosphate biosynthesis via DXP pathway; isopentenyl diphosphate from 1-deoxy-D-xylulose 5-phosphate: step 1/6. Functionally, catalyzes the NADPH-dependent rearrangement and reduction of 1-deoxy-D-xylulose-5-phosphate (DXP) to 2-C-methyl-D-erythritol 4-phosphate (MEP). The chain is 1-deoxy-D-xylulose 5-phosphate reductoisomerase from Chlorobium phaeobacteroides (strain BS1).